Reading from the N-terminus, the 853-residue chain is Dynein axonemal assembly factor 5 (853 aa).

Alanine 2 is modified (N-acetylalanine). 9 HEAT repeats span residues 69–107 (GPWA…RAAR), 200–238 (HMQS…FGSG), 240–276 (SVDD…NLRD), 278–316 (YSFL…QWQQ), 374–412 (RVKA…DEEK), 597–636 (GEAL…RPKD), 694–732 (QEAQ…NSGD), 736–774 (PEKF…CIES), and 782–820 (QSSV…LFPD).

It belongs to the DNAAF5 family. In terms of assembly, interacts with DNAI2; probably involved in outer arm dynein assembly. In terms of tissue distribution, expressed in ciliated cells including ependymal cells lining the lateral ventricles and multiciliated epithelium of oviduct ampulla.

The protein resides in the cytoplasm. The protein localises to the cytoplasmic granule. Cytoplasmic protein involved in the delivery of the dynein machinery to the motile cilium. It is required for the assembly of the axonemal dynein inner and outer arms, two structures attached to the peripheral outer doublet A microtubule of the axoneme, that play a crucial role in cilium motility. This is Dynein axonemal assembly factor 5 from Mus musculus (Mouse).